A 394-amino-acid chain; its full sequence is F-box/kelch-repeat protein At1g23390 (394 aa).

The 48-residue stretch at 15–62 (EEESSIDGDILESILSYLPLLDLDSACQVSKSWNRAVFYSLRRLKTMP) folds into the F-box domain. Kelch repeat units lie at residues 65–111 (FVYN…RSSH), 155–204 (SLII…TWLS), 206–252 (AVSS…SIGF), and 321–369 (MVYV…VIVA).

The sequence is that of F-box/kelch-repeat protein At1g23390 from Arabidopsis thaliana (Mouse-ear cress).